The primary structure comprises 445 residues: tRNA(Ile)-lysidine synthase (445 aa).

Residue Ser-30–Ser-35 coordinates ATP.

Belongs to the tRNA(Ile)-lysidine synthase family.

Its subcellular location is the cytoplasm. The enzyme catalyses cytidine(34) in tRNA(Ile2) + L-lysine + ATP = lysidine(34) in tRNA(Ile2) + AMP + diphosphate + H(+). Its function is as follows. Ligates lysine onto the cytidine present at position 34 of the AUA codon-specific tRNA(Ile) that contains the anticodon CAU, in an ATP-dependent manner. Cytidine is converted to lysidine, thus changing the amino acid specificity of the tRNA from methionine to isoleucine. The polypeptide is tRNA(Ile)-lysidine synthase (Alkalilimnicola ehrlichii (strain ATCC BAA-1101 / DSM 17681 / MLHE-1)).